Reading from the N-terminus, the 823-residue chain is Dolichyl-diphosphooligosaccharide--protein glycosyltransferase subunit STT3B (823 aa).

Residues 1 to 58 (MAEPSAPESKHKSSLNSSPWSGLMALGNSRHGHHGPGTQSASSAAAPKPGPPAGLSGG) form a disordered region. Ala-2 carries the N-acetylalanine modification. The Cytoplasmic portion of the chain corresponds to 2 to 41 (AEPSAPESKHKSSLNSSPWSGLMALGNSRHGHHGPGTQSA). Residues Ser-13, Ser-18, and Ser-29 each carry the phosphoserine modification. The chain crosses the membrane as a helical span at residues 42 to 83 (SSAAAPKPGPPAGLSGGLSQPAGWQSLLSFTILFLAWLAGFS). Residues 84-170 (SRLFAVIRFE…VHIRDVCVFL (87 aa)) are Lumenal-facing. The DXD motif 1 signature appears at 98 to 100 (EFD). Asp-100 provides a ligand contact to Mn(2+). Residues 171-189 (APTFSGLTSISTFLLTREL) traverse the membrane as a helical segment. Topologically, residues 190–191 (WN) are cytoplasmic. The helical transmembrane segment at 192–209 (QGAGLLAACFIAIVPGYI) threads the bilayer. Residues 210 to 220 (SRSVAGSFDNE) are Lumenal-facing. Positions 218 and 220 each coordinate Mn(2+). The DXD motif 2 motif lies at 218-220 (DNE). The helical transmembrane segment at 221-240 (GIAIFALQFTYYLWVKSVKT) threads the bilayer. Over 241–242 (GS) the chain is Cytoplasmic. The helical transmembrane segment at 243-257 (VFWTMCCCLSYFYMV) threads the bilayer. At 258–262 (SAWGG) the chain is on the lumenal side. The helical transmembrane segment at 263-279 (YVFIINLIPLHVFVLLL) threads the bilayer. The Cytoplasmic portion of the chain corresponds to 280–284 (MQRYS). The chain crosses the membrane as a helical span at residues 285–310 (KRVYIAYSTFYIVGLILSMQIPFVGF). The Lumenal portion of the chain corresponds to 311–318 (QPIRTSEH). The chain crosses the membrane as a helical span at residues 319 to 338 (MAAAGVFALLQAYAFLQYLR). The Cytoplasmic portion of the chain corresponds to 339–347 (DRLTKQEFQ). A helical transmembrane segment spans residues 348–368 (TLFFLGVSLAAGAVFLSVIYL). Topologically, residues 369 to 407 (TYTGYIAPWSGRFYSLWDTGYAKIHIPIIASVSEHQPTT) are lumenal. An SVSE motif motif is present at residues 399–402 (SVSE). The helical transmembrane segment at 408 to 430 (WVSFFFDLHILVCTFPAGLWFCI) threads the bilayer. At 431–436 (KNINDE) the chain is on the cytoplasmic side. Residues 437–453 (RVFVALYAISAVYFAGV) traverse the membrane as a helical segment. The Lumenal segment spans residues 454–457 (MVRL). Dolichyl diphosphooligosaccharide is bound at residue Arg-456. A helical transmembrane segment spans residues 458–479 (MLTLTPVVCMLSAIAFSNVFEH). At 480-523 (YLGDDMKRENPPVEDSSDEDDKRNPGNLYDKAGKVRKHVTEQEK) the chain is on the cytoplasmic side. The disordered stretch occupies residues 487-526 (RENPPVEDSSDEDDKRNPGNLYDKAGKVRKHVTEQEKPEE). A phosphoserine mark is found at Ser-495 and Ser-496. Residues 517 to 526 (HVTEQEKPEE) are compositionally biased toward basic and acidic residues. The chain crosses the membrane as a helical span at residues 524-549 (PEEGLGPNIKSIVTMLMLMLLMMFAV). Over 550-823 (HCTWVTSNAY…KGKKTSKKTV (274 aa)) the chain is Lumenal. Residues 601–603 (WWD) form an interacts with target acceptor peptide in protein substrate region. Positions 601–605 (WWDYG) match the WWDYG motif motif. A dolichyl diphosphooligosaccharide-binding site is contributed by Tyr-606. 2 N-linked (GlcNAc...) asparagine glycosylation sites follow: Asn-613 and Asn-620. N-linked (GlcNAc...) (high mannose) asparagine glycosylation occurs at Asn-624. Asn-638 carries an N-linked (GlcNAc...) asparagine glycan. Positions 668 to 675 (DINKFLWM) match the DK motif motif.

Belongs to the STT3 family. Component of the oligosaccharyltransferase (OST) complex. There are 2 OST complexes, OST-A and OST-B, which contain STT3A or STT3B as catalytic subunit, respectively. OST-A and OST-B contain common core subunits RPN1, RPN2, OST48, OST4, DAD1 and TMEM258, and OST-B contains either MAGT1 or TUSC3 as specific accessory subunit. Requires Mg(2+) as cofactor. The cofactor is Mn(2+).

Its subcellular location is the endoplasmic reticulum membrane. The enzyme catalyses a di-trans,poly-cis-dolichyl diphosphooligosaccharide + L-asparaginyl-[protein] = N(4)-(oligosaccharide-(1-&gt;4)-N-acetyl-beta-D-glucosaminyl-(1-&gt;4)-N-acetyl-beta-D-glucosaminyl)-L-asparaginyl-[protein] + a di-trans,poly-cis-dolichyl diphosphate + H(+). It functions in the pathway protein modification; protein glycosylation. Catalytic subunit of the oligosaccharyl transferase (OST) complex that catalyzes the initial transfer of a defined glycan (Glc(3)Man(9)GlcNAc(2) in eukaryotes) from the lipid carrier dolichol-pyrophosphate to an asparagine residue within an Asn-X-Ser/Thr consensus motif in nascent polypeptide chains, the first step in protein N-glycosylation. N-glycosylation occurs cotranslationally and the complex associates with the Sec61 complex at the channel-forming translocon complex that mediates protein translocation across the endoplasmic reticulum (ER). All subunits are required for a maximal enzyme activity. This subunit contains the active site and the acceptor peptide and donor lipid-linked oligosaccharide (LLO) binding pockets. STT3B is present in a small subset of OST complexes and mediates both cotranslational and post-translational N-glycosylation of target proteins: STT3B-containing complexes are required for efficient post-translational glycosylation and while they are less competent than STT3A-containing complexes for cotranslational glycosylation, they have the ability to mediate glycosylation of some nascent sites that are not accessible for STT3A. STT3B-containing complexes also act post-translationally and mediate modification of skipped glycosylation sites in unfolded proteins. Plays a role in ER-associated degradation (ERAD) pathway that mediates ubiquitin-dependent degradation of misfolded endoplasmic reticulum proteins by mediating N-glycosylation of unfolded proteins, which are then recognized by the ERAD pathway and targeted for degradation. This is Dolichyl-diphosphooligosaccharide--protein glycosyltransferase subunit STT3B from Mus musculus (Mouse).